We begin with the raw amino-acid sequence, 304 residues long: Protease HtpX homolog (304 aa).

Helical transmembrane passes span 19-39 (FIVF…VSYF) and 41-61 (LGEI…YYAY). His-146 is a binding site for Zn(2+). Residue Glu-147 is part of the active site. Zn(2+) is bound at residue His-150. Helical transmembrane passes span 156 to 176 (VRLQ…GDGL) and 192 to 212 (NILG…ATLL). Zn(2+) is bound at residue Glu-221.

It belongs to the peptidase M48B family. It depends on Zn(2+) as a cofactor.

The protein localises to the cell inner membrane. This is Protease HtpX homolog from Dictyoglomus turgidum (strain DSM 6724 / Z-1310).